The chain runs to 292 residues: ABC transporter ATP-binding protein YtrB (292 aa).

The ABC transporter domain maps to Ile-2–Thr-227. ATP is bound at residue Gly-34–Thr-41.

Belongs to the ABC transporter superfamily. In terms of assembly, the complex is composed of 2 ATP-binding proteins (YtrB and YtrE), 2 transmembrane proteins (YtrC and YtrD) and a solute-binding protein (YtrF).

Its subcellular location is the cell membrane. Part of the ABC transporter complex YtrBCDEF that plays a role in acetoin utilization during stationary phase and sporulation. The chain is ABC transporter ATP-binding protein YtrB (ytrB) from Bacillus subtilis (strain 168).